A 130-amino-acid polypeptide reads, in one-letter code: Small ribosomal subunit protein uS8 (130 aa).

This sequence belongs to the universal ribosomal protein uS8 family. As to quaternary structure, part of the 30S ribosomal subunit. Contacts proteins S5 and S12.

One of the primary rRNA binding proteins, it binds directly to 16S rRNA central domain where it helps coordinate assembly of the platform of the 30S subunit. This is Small ribosomal subunit protein uS8 from Klebsiella pneumoniae (strain 342).